The chain runs to 530 residues: Retinoic acid-induced protein 2 (530 aa).

The segment covering 1 to 13 has biased composition (polar residues); it reads MDDLQSQNLSMDM. The tract at residues 1–22 is disordered; that stretch reads MDDLQSQNLSMDMTDSPPALAN.

This is Retinoic acid-induced protein 2 (RAI2) from Homo sapiens (Human).